The sequence spans 211 residues: Large ribosomal subunit protein eL13 (211 aa).

Lysine 16 carries the N6-acetyllysine modification. Phosphoserine occurs at positions 52, 77, and 106. Glycyl lysine isopeptide (Lys-Gly) (interchain with G-Cter in SUMO2) cross-links involve residues lysine 123 and lysine 145. Residue lysine 174 forms a Glycyl lysine isopeptide (Lys-Gly) (interchain with G-Cter in SUMO1); alternate linkage. Residues lysine 174 and lysine 177 each participate in a glycyl lysine isopeptide (Lys-Gly) (interchain with G-Cter in SUMO2); alternate cross-link. Lysine 177 is modified (N6-acetyllysine; alternate).

This sequence belongs to the eukaryotic ribosomal protein eL13 family. In terms of assembly, component of the 60S large ribosomal subunit (LSU).

Its subcellular location is the cytoplasm. In terms of biological role, component of the ribosome, a large ribonucleoprotein complex responsible for the synthesis of proteins in the cell. The small ribosomal subunit (SSU) binds messenger RNAs (mRNAs) and translates the encoded message by selecting cognate aminoacyl-transfer RNA (tRNA) molecules. The large subunit (LSU) contains the ribosomal catalytic site termed the peptidyl transferase center (PTC), which catalyzes the formation of peptide bonds, thereby polymerizing the amino acids delivered by tRNAs into a polypeptide chain. The nascent polypeptides leave the ribosome through a tunnel in the LSU and interact with protein factors that function in enzymatic processing, targeting, and the membrane insertion of nascent chains at the exit of the ribosomal tunnel. As part of the LSU, it is probably required for its formation and the maturation of rRNAs. Plays a role in bone development. The chain is Large ribosomal subunit protein eL13 (Rpl13) from Rattus norvegicus (Rat).